Here is a 433-residue protein sequence, read N- to C-terminus: Phosphomethylpyrimidine synthase (433 aa).

Residues Asn68, Met97, Tyr126, His162, 184–186 (SRG), 225–228 (DALR), and Glu264 contribute to the substrate site. Residue His268 coordinates Zn(2+). Tyr291 contacts substrate. His332 contacts Zn(2+). Positions 408, 411, and 415 each coordinate [4Fe-4S] cluster.

It belongs to the ThiC family. The cofactor is [4Fe-4S] cluster.

The enzyme catalyses 5-amino-1-(5-phospho-beta-D-ribosyl)imidazole + S-adenosyl-L-methionine = 4-amino-2-methyl-5-(phosphooxymethyl)pyrimidine + CO + 5'-deoxyadenosine + formate + L-methionine + 3 H(+). It functions in the pathway cofactor biosynthesis; thiamine diphosphate biosynthesis. Functionally, catalyzes the synthesis of the hydroxymethylpyrimidine phosphate (HMP-P) moiety of thiamine from aminoimidazole ribotide (AIR) in a radical S-adenosyl-L-methionine (SAM)-dependent reaction. This is Phosphomethylpyrimidine synthase from Fusobacterium nucleatum subsp. nucleatum (strain ATCC 25586 / DSM 15643 / BCRC 10681 / CIP 101130 / JCM 8532 / KCTC 2640 / LMG 13131 / VPI 4355).